Reading from the N-terminus, the 70-residue chain is UPF0270 protein VV1_1320 (70 aa).

It belongs to the UPF0270 family.

The protein is UPF0270 protein VV1_1320 of Vibrio vulnificus (strain CMCP6).